Consider the following 60-residue polypeptide: MTTQQTIKIQLVRSPIGTKESHRATVRGLGLRKLNSISELKDTPEVRGMINKISYLVKVL.

It belongs to the universal ribosomal protein uL30 family. As to quaternary structure, part of the 50S ribosomal subunit.

The chain is Large ribosomal subunit protein uL30 from Acidovorax ebreus (strain TPSY) (Diaphorobacter sp. (strain TPSY)).